Reading from the N-terminus, the 167-residue chain is NADH-quinone oxidoreductase subunit I 1 (167 aa).

2 4Fe-4S ferredoxin-type domains span residues 58 to 88 (LRRY…IDAE) and 98 to 127 (TRYD…EGPN). [4Fe-4S] cluster-binding residues include Cys-68, Cys-71, Cys-74, Cys-78, Cys-107, Cys-110, Cys-113, and Cys-117.

This sequence belongs to the complex I 23 kDa subunit family. NDH-1 is composed of 14 different subunits. Subunits NuoA, H, J, K, L, M, N constitute the membrane sector of the complex. The cofactor is [4Fe-4S] cluster.

The protein localises to the cell inner membrane. The enzyme catalyses a quinone + NADH + 5 H(+)(in) = a quinol + NAD(+) + 4 H(+)(out). In terms of biological role, NDH-1 shuttles electrons from NADH, via FMN and iron-sulfur (Fe-S) centers, to quinones in the respiratory chain. The immediate electron acceptor for the enzyme in this species is believed to be ubiquinone. Couples the redox reaction to proton translocation (for every two electrons transferred, four hydrogen ions are translocated across the cytoplasmic membrane), and thus conserves the redox energy in a proton gradient. This is NADH-quinone oxidoreductase subunit I 1 from Cereibacter sphaeroides (strain ATCC 17029 / ATH 2.4.9) (Rhodobacter sphaeroides).